A 231-amino-acid polypeptide reads, in one-letter code: Lipoprotein-releasing system ATP-binding protein LolD (231 aa).

The ABC transporter domain maps to 6 to 231; the sequence is LQVQAVSKSY…YLQAVAEHAQ (226 aa). Position 42-49 (42-49) interacts with ATP; that stretch reads GTSGSGKS.

Belongs to the ABC transporter superfamily. Lipoprotein translocase (TC 3.A.1.125) family. As to quaternary structure, the complex is composed of two ATP-binding proteins (LolD) and two transmembrane proteins (LolC and LolE).

It localises to the cell inner membrane. Functionally, part of the ABC transporter complex LolCDE involved in the translocation of mature outer membrane-directed lipoproteins, from the inner membrane to the periplasmic chaperone, LolA. Responsible for the formation of the LolA-lipoprotein complex in an ATP-dependent manner. This is Lipoprotein-releasing system ATP-binding protein LolD from Shewanella sp. (strain MR-7).